The chain runs to 483 residues: MASLLWGGDAGAAESERLNGHFSNLIHPQNHLLGIKSATIPNIDGSVNRIEEDDEDDVVDLAANSLLNKLIRQSLVESSHRVEVLQKDPSSPLYSVKTFEELRLKEELLKGIYAMGFNRPSKIQEMALPMMLAHPPQNLIAQSQSGTGKTAAFVLAMLSRVNALKLFPQCLCLAPTYELALQTGRVVERMGKFCVDVQVMYAIRGNRIPRGTDVTKQIVIGTPGTVLDWCFKRKLIDLTKIRVFVLDEADVMIDTQGFEDQSIRIQRALPSECQMLLFSATFEDSVWQFAERIIPDPNVIKLRKEELTLNNIRQYYVLCGNRKDKYQALCNIYGGITIGQAIIFCQTRRNAKWLTVEMMQDGHQVSLLSGELTVDQRASIIQRFRDGKEKVLITTNVCARGIDVKQVTIVVNFDLPVNQAEEPDYETYLHRIGRTGRFGKKGLAFNMIEVDKLPLLMKIQDHFNSSIKQLDPEDMDEIEKIEY.

A Nuclear export signal motif is present at residues 61-74 (LAANSLLNKLIRQS). The short motif at 97 to 125 (KTFEELRLKEELLKGIYAMGFNRPSKIQE) is the Q motif element. The Nuclear localization signal motif lies at 100–114 (EELRLKEELLKGIYA). The Helicase ATP-binding domain occupies 130–300 (MMLAHPPQNL…ERIIPDPNVI (171 aa)). 143-150 (SQSGTGKT) lines the ATP pocket. Residues 247 to 250 (DEAD) carry the DEAD box motif. Residues 311–478 (NIRQYYVLCG…QLDPEDMDEI (168 aa)) form the Helicase C-terminal domain.

This sequence belongs to the DEAD box helicase family. Phosphorylated on threonine residues. The phosphorylated form is found in the cytoplasm but not in the nucleus.

It localises to the cytoplasm. The protein localises to the nucleus. It carries out the reaction ATP + H2O = ADP + phosphate + H(+). ATP-dependent RNA helicase. Required for mRNA export and translation regulation during spermatid development. This is ATP-dependent RNA helicase DDX25 (DDX25) from Bos taurus (Bovine).